Here is a 697-residue protein sequence, read N- to C-terminus: Phosphatase and actin regulator 4-B (697 aa).

One copy of the RPEL 1 repeat lies at 42-67 (EVLERKISMRKPREELVKRGLIVDVP). 2 disordered regions span residues 63 to 381 (IVDV…LTLA) and 450 to 569 (LKVP…SKDE). Over residues 189–202 (HVPEKTSEKYRPKS) the composition is skewed to basic and acidic residues. 2 stretches are compositionally biased toward pro residues: residues 317–326 (PSPPLPPKRA) and 370–380 (APNPPVPPLTL). 3 stretches are compositionally biased toward acidic residues: residues 454 to 469 (DDDDDEDELSLEDESL), 501 to 514 (QEEDEEEGVSDTDS), and 522 to 532 (EEDEDEEEEET). RPEL repeat units follow at residues 579–604 (TQLNRRLSQRPTAEELEQRNILQKNE) and 616–641 (RRLTRKLSQRPTVAELLERKILRFNE).

Belongs to the phosphatase and actin regulator family. In terms of assembly, binds ppp1ca and actin.

Its subcellular location is the cytoplasm. It localises to the cell projection. The protein resides in the lamellipodium. Its function is as follows. Regulator of protein phosphatase 1 (PP1) required for neural tube and optic fissure closure, and enteric neural crest cell (ENCCs) migration during development. Acts as an activator of PP1. During neural tube closure, localizes to the ventral neural tube and activates PP1, leading to down-regulate cell proliferation within cranial neural tissue and the neural retina. Also acts as a regulator of migration of enteric neural crest cells (ENCCs) by activating PP1, leading to repression of the integrin signaling through the rho/rock pathway. In Xenopus laevis (African clawed frog), this protein is Phosphatase and actin regulator 4-B (phactr4-b).